A 98-amino-acid polypeptide reads, in one-letter code: Aspartyl/glutamyl-tRNA(Asn/Gln) amidotransferase subunit C (98 aa).

A disordered region spans residues 70 to 98 (PSLTPEQALSGAPAQEQQRFKVPQILGED).

The protein belongs to the GatC family. As to quaternary structure, heterotrimer of A, B and C subunits.

It catalyses the reaction L-glutamyl-tRNA(Gln) + L-glutamine + ATP + H2O = L-glutaminyl-tRNA(Gln) + L-glutamate + ADP + phosphate + H(+). It carries out the reaction L-aspartyl-tRNA(Asn) + L-glutamine + ATP + H2O = L-asparaginyl-tRNA(Asn) + L-glutamate + ADP + phosphate + 2 H(+). Allows the formation of correctly charged Asn-tRNA(Asn) or Gln-tRNA(Gln) through the transamidation of misacylated Asp-tRNA(Asn) or Glu-tRNA(Gln) in organisms which lack either or both of asparaginyl-tRNA or glutaminyl-tRNA synthetases. The reaction takes place in the presence of glutamine and ATP through an activated phospho-Asp-tRNA(Asn) or phospho-Glu-tRNA(Gln). The protein is Aspartyl/glutamyl-tRNA(Asn/Gln) amidotransferase subunit C of Streptomyces avermitilis (strain ATCC 31267 / DSM 46492 / JCM 5070 / NBRC 14893 / NCIMB 12804 / NRRL 8165 / MA-4680).